The chain runs to 425 residues: Glutamyl-tRNA(Gln) amidotransferase subunit A (425 aa).

Catalysis depends on charge relay system residues Lys-29 and Ser-104. Ser-128 serves as the catalytic Acyl-ester intermediate.

It belongs to the amidase family. GatA subfamily. As to quaternary structure, heterotrimer of A, B and C subunits.

It catalyses the reaction L-glutamyl-tRNA(Gln) + L-glutamine + ATP + H2O = L-glutaminyl-tRNA(Gln) + L-glutamate + ADP + phosphate + H(+). Allows the formation of correctly charged Gln-tRNA(Gln) through the transamidation of misacylated Glu-tRNA(Gln) in organisms which lack glutaminyl-tRNA synthetase. The reaction takes place in the presence of glutamine and ATP through an activated gamma-phospho-Glu-tRNA(Gln). This chain is Glutamyl-tRNA(Gln) amidotransferase subunit A, found in Haloarcula marismortui (strain ATCC 43049 / DSM 3752 / JCM 8966 / VKM B-1809) (Halobacterium marismortui).